A 379-amino-acid chain; its full sequence is Homoserine O-succinyltransferase (379 aa).

Residues 51–360 enclose the AB hydrolase-1 domain; the sequence is NAVLICHALS…DAPQGHDAFL (310 aa). Ser-157 (nucleophile) is an active-site residue. A substrate-binding site is contributed by Arg-227. Catalysis depends on residues Asp-323 and His-356. Asp-357 is a binding site for substrate.

It belongs to the AB hydrolase superfamily. MetX family. As to quaternary structure, homodimer.

It is found in the cytoplasm. It catalyses the reaction L-homoserine + succinyl-CoA = O-succinyl-L-homoserine + CoA. The protein operates within amino-acid biosynthesis; L-methionine biosynthesis via de novo pathway; O-succinyl-L-homoserine from L-homoserine: step 1/1. In terms of biological role, transfers a succinyl group from succinyl-CoA to L-homoserine, forming succinyl-L-homoserine. This chain is Homoserine O-succinyltransferase, found in Ectopseudomonas mendocina (strain ymp) (Pseudomonas mendocina).